Consider the following 466-residue polypeptide: Glutamate--tRNA ligase 1 (466 aa).

The 'HIGH' region motif lies at 9–19 (PSPTGYLHIGG). Residues C98, C100, C125, and E127 each contribute to the Zn(2+) site. A 'KMSKS' region motif is present at residues 236 to 240 (KLSKR). An ATP-binding site is contributed by K239.

Belongs to the class-I aminoacyl-tRNA synthetase family. Glutamate--tRNA ligase type 1 subfamily. As to quaternary structure, monomer. Zn(2+) serves as cofactor.

The protein resides in the cytoplasm. It catalyses the reaction tRNA(Glu) + L-glutamate + ATP = L-glutamyl-tRNA(Glu) + AMP + diphosphate. Catalyzes the attachment of glutamate to tRNA(Glu) in a two-step reaction: glutamate is first activated by ATP to form Glu-AMP and then transferred to the acceptor end of tRNA(Glu). The sequence is that of Glutamate--tRNA ligase 1 from Acidithiobacillus ferrooxidans (strain ATCC 53993 / BNL-5-31) (Leptospirillum ferrooxidans (ATCC 53993)).